A 196-amino-acid chain; its full sequence is Ribosome maturation factor RimP (196 aa).

A compositionally biased stretch (basic residues) spans 131–145 (KKKAGKKSQGKKAGK). The disordered stretch occupies residues 131 to 153 (KKKAGKKSQGKKAGKKTPQAPVQ).

This sequence belongs to the RimP family.

The protein localises to the cytoplasm. Functionally, required for maturation of 30S ribosomal subunits. In Corynebacterium urealyticum (strain ATCC 43042 / DSM 7109), this protein is Ribosome maturation factor RimP.